The following is a 692-amino-acid chain: Elongation factor G (692 aa).

One can recognise a tr-type G domain in the interval 8 to 282 (EKTRNIGIMA…AVIDYLPSPL (275 aa)). GTP is bound by residues 17 to 24 (AHVDAGKT), 81 to 85 (DTPGH), and 135 to 138 (NKMD).

Belongs to the TRAFAC class translation factor GTPase superfamily. Classic translation factor GTPase family. EF-G/EF-2 subfamily.

Its subcellular location is the cytoplasm. Functionally, catalyzes the GTP-dependent ribosomal translocation step during translation elongation. During this step, the ribosome changes from the pre-translocational (PRE) to the post-translocational (POST) state as the newly formed A-site-bound peptidyl-tRNA and P-site-bound deacylated tRNA move to the P and E sites, respectively. Catalyzes the coordinated movement of the two tRNA molecules, the mRNA and conformational changes in the ribosome. The sequence is that of Elongation factor G from Streptococcus agalactiae serotype III (strain NEM316).